A 278-amino-acid chain; its full sequence is Diaminopimelate epimerase (278 aa).

3 residues coordinate substrate: asparagine 13, glutamine 46, and asparagine 65. Cysteine 74 acts as the Proton donor in catalysis. Substrate-binding positions include 75–76 (GN), asparagine 157, asparagine 190, and 208–209 (ER). Residue cysteine 217 is the Proton acceptor of the active site. 218-219 (GT) provides a ligand contact to substrate.

This sequence belongs to the diaminopimelate epimerase family. As to quaternary structure, homodimer.

The protein resides in the cytoplasm. The catalysed reaction is (2S,6S)-2,6-diaminopimelate = meso-2,6-diaminopimelate. Its pathway is amino-acid biosynthesis; L-lysine biosynthesis via DAP pathway; DL-2,6-diaminopimelate from LL-2,6-diaminopimelate: step 1/1. In terms of biological role, catalyzes the stereoinversion of LL-2,6-diaminopimelate (L,L-DAP) to meso-diaminopimelate (meso-DAP), a precursor of L-lysine and an essential component of the bacterial peptidoglycan. This Magnetococcus marinus (strain ATCC BAA-1437 / JCM 17883 / MC-1) protein is Diaminopimelate epimerase.